The following is a 576-amino-acid chain: Low-affinity glucose transporter HXT4 (576 aa).

Positions 1 to 56 are disordered; it reads MSEEAAYQEDTAVQNTPADALSPVESDSNSALSTPSNKAERDDMKDFDENHEESNN. Over 1 to 66 the chain is Cytoplasmic; that stretch reads MSEEAAYQED…YVEIPKKPAS (66 aa). The span at 25-37 shows a compositional bias: polar residues; it reads ESDSNSALSTPSN. Over residues 38–54 the composition is skewed to basic and acidic residues; the sequence is KAERDDMKDFDENHEES. K45 is covalently cross-linked (Glycyl lysine isopeptide (Lys-Gly) (interchain with G-Cter in ubiquitin)). A helical membrane pass occupies residues 67 to 87; it reads AYVTVSICCLMVAFGGFVFGW. Residues 88–122 lie on the Extracellular side of the membrane; that stretch reads DTGTISGFVAQTDFIRRFGMKHHDGTYYLSKVRTG. A helical transmembrane segment spans residues 123–143; the sequence is LIVSIFNIGCAIGGIILAKLG. Topologically, residues 144-149 are cytoplasmic; the sequence is DMYGRK. The chain crosses the membrane as a helical span at residues 150–170; sequence MGLIVVVVIYIIGIIIQIASI. Topologically, residues 171–180 are extracellular; it reads NKWYQYFIGR. Residues 181 to 201 form a helical membrane-spanning segment; that stretch reads IISGLGVGGIAVLSPMLISEV. Over 202-207 the chain is Cytoplasmic; sequence SPKHIR. A helical transmembrane segment spans residues 208–228; it reads GTLVSCYQLMITLGIFLGYCT. Topologically, residues 229 to 242 are extracellular; that stretch reads NYGTKTYTNSVQWR. The helical transmembrane segment at 243–263 threads the bilayer; that stretch reads VPLGLGFAWALFMIGGMTFVP. At 264-346 the chain is on the cytoplasmic side; the sequence is ESPRYLVEVG…IQSLQQLTGD (83 aa). A helical transmembrane segment spans residues 347 to 363; it reads NYFFYYGTTVFTAVGLE. The Extracellular portion of the chain corresponds to 364–369; sequence DSFETS. A helical membrane pass occupies residues 370 to 387; it reads IVLGIVNFASTFVGIFLV. Over 388–394 the chain is Cytoplasmic; sequence ERYGRRR. The chain crosses the membrane as a helical span at residues 395 to 415; it reads CLLWGAASMTACMVVFASVGV. Topologically, residues 416–437 are extracellular; sequence TRLWPNGKKNGSSKGAGNCMIV. The N-linked (GlcNAc...) asparagine glycan is linked to N425. A helical transmembrane segment spans residues 438–458; that stretch reads FTCFYLFCFATTWAPIPFVVN. Residues 459 to 475 lie on the Cytoplasmic side of the membrane; that stretch reads SETFPLRVKSKCMAIAQ. A helical transmembrane segment spans residues 476 to 496; the sequence is ACNWIWGFLIGFFTPFISGAI. Position 497 (D497) is a topological domain, extracellular. The helical transmembrane segment at 498–518 threads the bilayer; the sequence is FYYGYVFMGCLVFSYFYVFFF. Over 519 to 576 the chain is Cytoplasmic; sequence VPETKGLTLEEVNTLWEEGVLPWKSPSWVPPNKRGTDYNADDLMHDDQPFYKKMFGKK.

This sequence belongs to the major facilitator superfamily. Sugar transporter (TC 2.A.1.1) family.

It localises to the cell membrane. With respect to regulation, xylose uptake is strongly inhibited by glucose. Low-affinity glucose transporter. Can also transport xylose. This is Low-affinity glucose transporter HXT4 (HXT4) from Saccharomyces cerevisiae (strain ATCC 204508 / S288c) (Baker's yeast).